We begin with the raw amino-acid sequence, 180 residues long: NADH-quinone oxidoreductase subunit I (180 aa).

4Fe-4S ferredoxin-type domains follow at residues 44–74 and 90–119; these read LNRY…VEGA and RVYQ…MTTE. Cys-54, Cys-57, Cys-60, Cys-64, Cys-99, Cys-102, Cys-105, and Cys-109 together coordinate [4Fe-4S] cluster. Positions 145–180 are disordered; it reads MQAPPHDMAPGKTDDDYYLGNVTPITPVPSGTEDAR.

Belongs to the complex I 23 kDa subunit family. In terms of assembly, NDH-1 is composed of 14 different subunits. Subunits NuoA, H, J, K, L, M, N constitute the membrane sector of the complex. Requires [4Fe-4S] cluster as cofactor.

It localises to the cell membrane. The enzyme catalyses a quinone + NADH + 5 H(+)(in) = a quinol + NAD(+) + 4 H(+)(out). NDH-1 shuttles electrons from NADH, via FMN and iron-sulfur (Fe-S) centers, to quinones in the respiratory chain. The immediate electron acceptor for the enzyme in this species is believed to be menaquinone. Couples the redox reaction to proton translocation (for every two electrons transferred, four hydrogen ions are translocated across the cytoplasmic membrane), and thus conserves the redox energy in a proton gradient. The chain is NADH-quinone oxidoreductase subunit I from Mycolicibacterium smegmatis (strain ATCC 700084 / mc(2)155) (Mycobacterium smegmatis).